The following is a 317-amino-acid chain: Annexin D2 (317 aa).

Residue alanine 2 is modified to N-acetylalanine. 4 Annexin repeats span residues 11-82 (PLPE…LWTL), 83-154 (DPPE…PLVS), 166-238 (MLAR…AVIT), and 242-313 (YPEK…ALLG). Phenylalanine 24, glycine 26, glycine 28, and glutamate 68 together coordinate Ca(2+). Position 95 is a phosphoserine (serine 95). Threonine 100 and threonine 112 each carry phosphothreonine. Tyrosine 129 carries the phosphotyrosine modification. The Ca(2+) site is built by isoleucine 255 and glycine 259. Position 284 is a phosphotyrosine (tyrosine 284). Serine 289 bears the Phosphoserine mark. Ca(2+) is bound by residues aspartate 299, threonine 300, and glutamate 305.

This sequence belongs to the annexin (TC 1.A.31.1) family. In terms of tissue distribution, expressed mainly in roots and flowers. Low in stems and bearly detectable in leaves.

The protein resides in the cytoplasm. The protein localises to the cytosol. It localises to the membrane. Functionally, may mediate regulated, targeted secretion of Golgi-derived vesicles during seedling development. The chain is Annexin D2 (ANN2) from Arabidopsis thaliana (Mouse-ear cress).